The chain runs to 3660 residues: Dystrophin (3660 aa).

Residues 1–244 (MSAHVLWYEE…YVTSLFQVLP (244 aa)) are actin-binding. 2 consecutive Calponin-homology (CH) domains span residues 19–123 (DVQK…LHWQ) and 138–244 (TNSE…QVLP). 22 Spectrin repeats span residues 341-449 (MDLD…NLHK), 450-558 (ILMD…LLQD), 561-669 (RKWQ…QVSQ), 721-830 (EIRK…WLEY), 832-936 (NSII…QLQT), 945-1047 (RYKD…KLED), 1050-1156 (TKLQ…ALKG), 1159-1265 (DKTV…TLEE), 1268-1369 (ACWH…SLEQ), 1470-1570 (EQRL…ELEK), 1573-1678 (KLSR…LLME), 1681-1782 (KHME…FIPL), 1879-1981 (HQWY…TVLE), 2013-2103 (LSEV…RFDK), 2106-2211 (EKWR…RIEE), 2214-2321 (NILS…EIEI), 2472-2574 (FNKA…QLHE), 2577-2683 (KDST…ALES), 2686-2799 (LMLQ…HLEA), 2802-2904 (DQWK…LRRQ), 2906-2928 (DDVR…KIDD), and 2931-3037 (ERLQ…QLHE). The WW domain occupies 3052-3085 (TSVQGPWERAISPNKVPYYINHETQTTCWDHPKM). The ZZ-type; degenerate zinc-finger motif lies at 3305–3361 (KHQAKCNICKECPIIGFRYRSLKHFNYDICQSCFFSGRVAKGHKMHYPMVEYCTPTT). Residues Cys3310, Cys3313, Cys3334, and Cys3337 each contribute to the Zn(2+) site. Disordered regions lie at residues 3503–3526 (KQQH…VSPQ) and 3575–3660 (PQAD…EATM). Polar residues-rich tracts occupy residues 3582-3601 (NGTT…SSQP) and 3637-3647 (QLNNSFPSSRG).

It is found in the cell membrane. The protein localises to the sarcolemma. It localises to the cytoplasm. Its subcellular location is the cytoskeleton. The protein resides in the postsynaptic cell membrane. Functionally, may play a role in anchoring the cytoskeleton to the plasma membrane. The sequence is that of Dystrophin (DMD) from Gallus gallus (Chicken).